Consider the following 520-residue polypeptide: Anthranilate synthase component 1 (520 aa).

L-tryptophan contacts are provided by residues S40, K50, and 291 to 293 (PYM). A chorismate-binding site is contributed by 328–329 (GT). E361 serves as a coordination point for Mg(2+). Residues Y449, R469, 483-485 (GAG), and G485 each bind chorismate. E498 provides a ligand contact to Mg(2+).

This sequence belongs to the anthranilate synthase component I family. As to quaternary structure, homodimer. In fact, exists in a monomer-dimer equilibrium in solution, shifted spontaneously in favor of the dimer; the monomer has a reduced activity compared with the dimer. Heterotetramer consisting of two non-identical subunits: a beta subunit (TrpG) and a large alpha subunit (TrpE) (Potential). The cofactor is Mg(2+).

The enzyme catalyses chorismate + L-glutamine = anthranilate + pyruvate + L-glutamate + H(+). It functions in the pathway amino-acid biosynthesis; L-tryptophan biosynthesis; L-tryptophan from chorismate: step 1/5. Its activity is regulated as follows. Cooperatively feedback inhibited by tryptophan. Its function is as follows. Part of a heterotetrameric complex that catalyzes the two-step biosynthesis of anthranilate, an intermediate in the biosynthesis of L-tryptophan. In the first step, the glutamine-binding beta subunit (TrpG) of anthranilate synthase (AS) provides the glutamine amidotransferase activity which generates ammonia as a substrate that, along with chorismate, is used in the second step, catalyzed by the large alpha subunit of AS (TrpE) to produce anthranilate. In the absence of TrpG, TrpE can synthesize anthranilate directly from chorismate and high concentrations of ammonia. This is Anthranilate synthase component 1 (trpE) from Salmonella typhimurium (strain LT2 / SGSC1412 / ATCC 700720).